We begin with the raw amino-acid sequence, 535 residues long: Keratin, type II cytoskeletal 79 (535 aa).

Composition is skewed to polar residues over residues 1–12 (MRSSVSRQTYST) and 28–38 (QARTSFSSVTV). The interval 1–53 (MRSSVSRQTYSTKGAFSSSSASGGGGSQARTSFSSVTVSRNSGRGGGPRCGPS) is disordered. The head stretch occupies residues 1-141 (MRSSVSRQTY…DPEIQRVRTE (141 aa)). Residues 43 to 53 (GRGGGPRCGPS) show a composition bias toward gly residues. The interval 142–177 (EREQIKTLNNKFASFIDKVRFLEQQNKVLETKWALL) is coil 1A. The 316-residue stretch at 142–457 (EREQIKTLNN…KLLESEESRM (316 aa)) folds into the IF rod domain. The tract at residues 178–198 (QEQGQKSGVTRNNLEPLFEHF) is linker 1. The segment at 199-290 (INNLRGKLDN…HLYEEELSQV (92 aa)) is coil 1B. A linker 12 region spans residues 291 to 314 (QTHVSDTSVILSMDNNRNLDLDSI). Positions 315–453 (IAEVKAQYEQ…ATYRKLLESE (139 aa)) are coil 2. Residues 454-535 (ESRMSGECPS…TTVKTSSRRY (82 aa)) form a tail region.

Belongs to the intermediate filament family. As to quaternary structure, heterotetramer of two type I and two type II keratins.

The polypeptide is Keratin, type II cytoskeletal 79 (KRT79) (Bos taurus (Bovine)).